The following is a 216-amino-acid chain: Probable GTP-binding protein EngB (216 aa).

An EngB-type G domain is found at 27 to 201 (EGIEVAFAGR…SQKLNTWFNE (175 aa)). GTP is bound by residues 35 to 42 (GRSNAGKS), 62 to 66 (GRTQL), 80 to 83 (DLPG), 147 to 150 (TKAD), and 180 to 182 (FSS). 2 residues coordinate Mg(2+): S42 and T64.

It belongs to the TRAFAC class TrmE-Era-EngA-EngB-Septin-like GTPase superfamily. EngB GTPase family. Mg(2+) serves as cofactor.

Necessary for normal cell division and for the maintenance of normal septation. In Serratia proteamaculans (strain 568), this protein is Probable GTP-binding protein EngB.